The chain runs to 455 residues: MGQLPKPSKISFGTDGLRGRVDTMLTPALALQVGYWCGRVLQAEGPVLIGMDSRSSGSMLVAALTAGLTASGREVWTLGLCPTPAVPGLIRRYSAAGGLMVSASHNPPEDNGIKVFGATGSKLSPERQQAIEAGLCGGDGSGMALAASGAARHRPELLDDYRASLLSSVGQHRLDGVPIVLDLCWGSATACGAEVFSALGADLTVLHGDPDGTRINVNCGSTHLEALRRAVIEKGAAMGFGFDGDADRMLAVDGQGRVVDGDHVLFLWGSVLQEQGQLPDQRLVATVMSNLGFERAWQARGGLLDRTPVGDQHVHAEMVRTGAALGGEQSGHILSSAHGLAGDGVLTALQIASLCHAQQLSLAEWVDQSFQAYPQKLVNVRVENRERRKGWADCAPLSSLVQEAEASMAEDGRVLVRASGTEPLLRVMVEAADQAVVDHWTSSLAAAAELHLNAS.

The Phosphoserine intermediate role is filled by Ser104. Positions 104, 243, 245, and 247 each coordinate Mg(2+). A Phosphoserine modification is found at Ser104.

Belongs to the phosphohexose mutase family. It depends on Mg(2+) as a cofactor. Activated by phosphorylation.

It catalyses the reaction alpha-D-glucosamine 1-phosphate = D-glucosamine 6-phosphate. Functionally, catalyzes the conversion of glucosamine-6-phosphate to glucosamine-1-phosphate. The chain is Phosphoglucosamine mutase from Synechococcus sp. (strain CC9311).